A 2590-amino-acid polypeptide reads, in one-letter code: DNA polymerase theta (2590 aa).

Over residues 1–12 (MNLLRRSGKRRR) the composition is skewed to basic residues. Residues 1 to 33 (MNLLRRSGKRRRSESGSDSFSGSGGDSSASPQF) form a disordered region. Residues 16–30 (GSDSFSGSGGDSSAS) show a composition bias toward low complexity. Residues Gln-96 and 115–122 (APTSAGKT) each bind ATP. The Helicase ATP-binding domain occupies 102 to 286 (LGQVLEGKNL…WLNAELYHTD (185 aa)). The tract at residues 102–554 (LGQVLEGKNL…STSQDMHTYA (453 aa)) is helicase activity. Positions 216-219 (DELH) match the DEAH box motif. One can recognise a Helicase C-terminal domain in the interval 321–554 (GDEDHVVSLC…STSQDMHTYA (234 aa)). The tract at residues 847–894 (DEEEEAVEERRNMRTIWVTGRKGLTEREAAALIVEEARMILQQDLVEM) is interaction with RAD51. Lys-990 carries the N6-acetyllysine modification. Residues 1034-1060 (KMSRSFRSWKRRKHLKRSRDSSPLKDS) are disordered. Residues 1040–1050 (RSWKRRKHLKR) are compositionally biased toward basic residues. Phosphoserine; by PLK1 is present on residues Ser-1289, Ser-1482, Ser-1486, Ser-1488, Ser-1493, Ser-1555, and Ser-1563. The segment at 1594 to 1622 (SDPVLDEHHQGDQDGGDQDERAEKSKLTG) is disordered. A compositionally biased stretch (basic and acidic residues) spans 1598-1619 (LDEHHQGDQDGGDQDERAEKSK). Ser-1628 and Ser-1635 each carry phosphoserine; by PLK1. Residue Thr-1755 is modified to Phosphothreonine; by PLK1. The segment at 1777–1797 (PSDIKNHDLSPGSRNGFKDNS) is disordered. The segment at 2097 to 2584 (AECESQKHIM…KVKIGASWGE (488 aa)) is DNA polymerase activity. Loop stretches follow at residues 2142–2177 (KLPPNREMKNQGSKKTLGSTRRGIDNGRKLRLGRQF) and 2257–2322 (EIKM…VPFP). Mg(2+) contacts are provided by Asp-2330 and Tyr-2331. The tract at residues 2491-2535 (QLETFHSTFKSHGHREGMLQSDQTGLSRKRKLQGMFCPIRGGFFI) is loop 3. Asp-2540 contacts Mg(2+).

Belongs to the DNA polymerase type-A family. In terms of assembly, homomultimer; forms homodimers and homotetramers. Interacts with RAD51. Interacts with ORC2 and ORC4. Interacts with RHNO1; interaction takes place during mitosis and promotes POLQ recruitment to DNA damage sites. Interacts (when phosphorylated) with TOPBP1 (via BRCT domains 7 and 8); promoting POLQ recruitment to DNA damage sites. It depends on Mg(2+) as a cofactor. In terms of processing, phosphorylated by PLK1; promoting interaction with TOPBP1 and recruitment to DNA damage sites. Highly expressed in testis.

Its subcellular location is the nucleus. The protein localises to the chromosome. The catalysed reaction is DNA(n) + a 2'-deoxyribonucleoside 5'-triphosphate = DNA(n+1) + diphosphate. It catalyses the reaction ATP + H2O = ADP + phosphate + H(+). With respect to regulation, specifically inhibited by the antibiotic novobiocin. The polymerase activity is specifically inhibited by the small molecule ART558. Novobiocin and ART558 confer specific killing of BRCA1/2-deficient cells and synergize with the poly [ADP-ribose] polymerase (PARP) inhibitor olaparib. Low-fidelity DNA polymerase with a helicase activity that promotes microhomology-mediated end-joining (MMEJ), an alternative non-homologous end-joining (NHEJ) machinery required to repair double-strand breaks in DNA during mitosis. MMEJ is an error-prone repair pathway that produces deletions of sequences from the strand being repaired and promotes genomic rearrangements, such as telomere fusions, some of them leading to cellular transformation. MMEJ is required during mitosis to repair persistent double-strand breaks that originate in S-phase. Although error-prone, MMEJ protects against chromosomal instability and tumorigenesis. The polymerase acts by binding directly the 2 ends of resected double-strand breaks, allowing microhomologous sequences in the overhangs to form base pairs. It then extends each strand from the base-paired region using the opposing overhang as a template. Requires partially resected DNA containing 2 to 6 base pairs of microhomology to perform MMEJ. The polymerase lacks proofreading activity and is highly promiscuous: unlike most polymerases, promotes extension of ssDNA and partial ssDNA (pssDNA) substrates. When the ends of a break do not contain terminal microhomology must identify embedded complementary sequences through a scanning step. Also acts as a DNA helicase, promoting dissociation of the replication protein A complex (RPA/RP-A), composed of RPA1, RPA2 and RPA3, from resected double-strand breaks to allow their annealing and subsequent joining by MMEJ. Removal of RPA/RP-A complex proteins prevents RAD51 accumulation at resected ends, thereby inhibiting homology-recombination repair (HR) pathway. Also shows RNA-directed DNA polymerase activity to mediate DNA repair in vitro; however this activity needs additional evidence in vivo. May also have lyase activity. Involved in somatic hypermutation of immunoglobulin genes, a process that requires the activity of DNA polymerases to ultimately introduce mutations at both A/T and C/G base pairs. POLQ-mediated end joining activity is involved in random integration of exogenous DNA hampers. The chain is DNA polymerase theta from Homo sapiens (Human).